A 349-amino-acid chain; its full sequence is MIAMTNAPRLIAWELTAGCNLNCVHCRGASTSSVPAGELTTDEAKHFIDEVASIGKPILILSGGEPLTRPDVFEIARYGTDAGLRVVLATNGTLLTPEIVEKLRAAGVQRLSVSIDGANAETHDNFRGMPGAFERTLAGIEVLRKADFPFQINTTVSKRNLEEITKTFELAKELGAVAYHVFFLVPTGRGDESDEVSPADYERILHWFYEMQKESKIQLKATCAPHYFRIMRQQAKKEGIEISVKTHGYEAMTKGCLGGTGFCFVSSVGKVFPCGYLPVLAGNIREQPFREIWENAEVFRKLRDPEELKGKCGICEYKKVCAGCRARAYAATGDYLEEEPYCIYRPGKK.

Positions 5–214 (TNAPRLIAWE…LHWFYEMQKE (210 aa)) constitute a Radical SAM core domain. [4Fe-4S] cluster-binding residues include cysteine 19, cysteine 23, and cysteine 26.

It belongs to the radical SAM superfamily. Requires [4Fe-4S] cluster as cofactor.

It catalyses the reaction Fe-coproporphyrin III + 2 S-adenosyl-L-methionine = heme b + 2 5'-deoxyadenosine + 2 L-methionine + 2 CO2. Its pathway is porphyrin-containing compound metabolism; protoheme biosynthesis. Involved in siroheme-dependent heme b biosynthesis. Catalyzes the conversion of Fe-coproporphyrin III into heme by the oxidative decarboxylation of two propionate side chains. This is AdoMet-dependent heme synthase from Methanosarcina barkeri (strain Fusaro / DSM 804).